Reading from the N-terminus, the 565-residue chain is Heme/hemopexin transporter protein HuxB (565 aa).

The N-terminal stretch at 1-26 (MKMRPRYSVIASAVSLGFVLSKSVMA) is a signal peptide. Residues 73–150 (FPLTQVQILD…GTVKILLLKG (78 aa)) enclose the POTRA domain.

Belongs to the TPS (TC 1.B.20) family.

The protein resides in the cell outer membrane. In terms of biological role, likely functions in the release of soluble HxuA from the cell. Probable member of a two partner secretion pathway (TPS) in which it mediates the secretion of HuxA. The chain is Heme/hemopexin transporter protein HuxB (hxuB) from Haemophilus influenzae.